Consider the following 212-residue polypeptide: Ribonuclease HII (212 aa).

The RNase H type-2 domain occupies 17–211 (ANLAGIDEAG…VIEALLSLEQ (195 aa)). A divalent metal cation-binding residues include D23, E24, and D120.

It belongs to the RNase HII family. Requires Mn(2+) as cofactor. Mg(2+) serves as cofactor.

It is found in the cytoplasm. It catalyses the reaction Endonucleolytic cleavage to 5'-phosphomonoester.. Functionally, endonuclease that specifically degrades the RNA of RNA-DNA hybrids. In Chloroflexus aurantiacus (strain ATCC 29364 / DSM 637 / Y-400-fl), this protein is Ribonuclease HII.